A 374-amino-acid chain; its full sequence is MNNLIKAYAAGVMSAAFLFGSEGRVRSESDRVRGEDPWHLLQWAQVVYEREEFGDTLRYAQRARALRREQVEHQCRVLLRARTRAESAGIPETLSDLYALLKSRGETDACEVLDAIFLTHAPHVFQNSVSKLLQWLKDSAAFPEAELLLGKVFEGEGEYAQALQHYRNAWDTRAQLVVPDARFDIIYAMANVSRLLSQQDEREKYLLLVLSEDPLYSAREVWGKTLHAMLRTIRSSNTVEKFFKLYRHRNVLALRAYQELTEMYVRTDNIERALPVSVLAADIAISALDSFLQKIELTYQYKDLADLFLRTGSHPTILKWANEHGVWQTLLHFADLLYKKGLHAQARDMYYNLAEKCPAFEYARRAAYKLSLTL.

The N-terminal stretch at 1–26 is a signal peptide; sequence MNNLIKAYAAGVMSAAFLFGSEGRVR.

This is an uncharacterized protein from Treponema pallidum (strain Nichols).